We begin with the raw amino-acid sequence, 467 residues long: NADH-quinone oxidoreductase subunit N 2 (467 aa).

Helical transmembrane passes span 1-21 (MSIFSLLPELWLLGLVCALFV), 31-51 (VASWLPMAAGLGVLAALFALG), 66-86 (LSQFFKLLIAFGFAVVTGIAA), 99-119 (FMLLALSAWGLMLLASCVELI), 153-173 (ILFGAAVTALALFGLSYIIAA), 195-215 (AVIGLTLFLAGFFYKLALFPF), 231-253 (AAYVATIPKLGAVVVLVRLAAFV), 258-280 (EVTTILAILGAVSMTAGNLAALV), 287-307 (LLGFSSVAHAGYVMLGLAAGS), 315-335 (AFYSLAYILMNLAAFYVVCAI), 357-377 (LAMILAVAAFSLVGLPPTAGF), 394-414 (WLVIVAVLNTAISIYYYLSMV), and 434-454 (LIFGGALAVLVLLLGILPAPL).

Belongs to the complex I subunit 2 family. As to quaternary structure, NDH-1 is composed of 14 different subunits. Subunits NuoA, H, J, K, L, M, N constitute the membrane sector of the complex.

The protein resides in the cell inner membrane. It catalyses the reaction a quinone + NADH + 5 H(+)(in) = a quinol + NAD(+) + 4 H(+)(out). NDH-1 shuttles electrons from NADH, via FMN and iron-sulfur (Fe-S) centers, to quinones in the respiratory chain. The immediate electron acceptor for the enzyme in this species is believed to be ubiquinone. Couples the redox reaction to proton translocation (for every two electrons transferred, four hydrogen ions are translocated across the cytoplasmic membrane), and thus conserves the redox energy in a proton gradient. The polypeptide is NADH-quinone oxidoreductase subunit N 2 (Solidesulfovibrio magneticus (strain ATCC 700980 / DSM 13731 / RS-1) (Desulfovibrio magneticus)).